A 504-amino-acid chain; its full sequence is Protein Dok-7 (504 aa).

The 106-residue stretch at 4–109 (AALVEGQVKL…WDARIRYALG (106 aa)) folds into the PH domain. Residues 105–210 (RYALGEVHRF…RGISPTKGPF (106 aa)) enclose the IRS-type PTB domain. 3 disordered regions span residues 210 to 229 (FGLR…TVEE), 249 to 351 (SHAG…YSSS), and 411 to 483 (LCLA…PHAG). Low complexity-rich tracts occupy residues 263–279 (LSSS…SASS) and 288–310 (SSSS…AGEA). Polar residues predominate over residues 331–341 (GRQSSSDSGIA).

As to quaternary structure, homodimer. Forms a heterotetramer composed of 2 DOK7 and 2 MUSK molecules which facilitates MUSK trans-autophosphorylation on tyrosine residue and activation. Interacts (via IRS-type PTB domain) with MUSK (via cytoplasmic part); requires MUSK phosphorylation. As to expression, preferentially expressed in skeletal muscle and heart. Present in thigh muscle, diaphragm and heart but not in the liver or spleen (at protein level).

The protein localises to the cell membrane. It is found in the synapse. Probable muscle-intrinsic activator of MUSK that plays an essential role in neuromuscular synaptogenesis. Acts in aneural activation of MUSK and subsequent acetylcholine receptor (AchR) clustering in myotubes. Induces autophosphorylation of MUSK. This chain is Protein Dok-7 (DOK7), found in Homo sapiens (Human).